Here is a 180-residue protein sequence, read N- to C-terminus: Protein GrpE (180 aa).

A disordered region spans residues 1-25 (MSKKKAEDKQPIIKDEAVEEPKSDS).

The protein belongs to the GrpE family. Homodimer.

It localises to the cytoplasm. Participates actively in the response to hyperosmotic and heat shock by preventing the aggregation of stress-denatured proteins, in association with DnaK and GrpE. It is the nucleotide exchange factor for DnaK and may function as a thermosensor. Unfolded proteins bind initially to DnaJ; upon interaction with the DnaJ-bound protein, DnaK hydrolyzes its bound ATP, resulting in the formation of a stable complex. GrpE releases ADP from DnaK; ATP binding to DnaK triggers the release of the substrate protein, thus completing the reaction cycle. Several rounds of ATP-dependent interactions between DnaJ, DnaK and GrpE are required for fully efficient folding. The protein is Protein GrpE of Fructilactobacillus sanfranciscensis (Lactobacillus sanfranciscensis).